A 277-amino-acid chain; its full sequence is Carbonyl reductase [NADPH] 1 (277 aa).

Residues 10-34 (VTGANKGVGFAITRALCRLFSGDVL), 63-64 (DI), and N90 contribute to the NADP(+) site. A Phosphoserine modification is found at S30. Glutathione contacts are provided by residues 95–97 (FKM) and Q106. S140 contributes to the substrate binding site. 193–194 (AY) contributes to the glutathione binding site. The Proton acceptor role is filled by Y194. NADP(+) contacts are provided by residues 194 to 198 (YGVTK) and 231 to 233 (VRT).

Belongs to the short-chain dehydrogenases/reductases (SDR) family. In terms of assembly, monomer. In terms of tissue distribution, present in liver and kidney.

The protein resides in the cytoplasm. The catalysed reaction is a secondary alcohol + NADP(+) = a ketone + NADPH + H(+). The enzyme catalyses prostaglandin F2alpha + NADP(+) = prostaglandin E2 + NADPH + H(+). It catalyses the reaction prostaglandin E1 + NADP(+) = 15-oxoprostaglandin E1 + NADPH + H(+). It carries out the reaction menadione + NADPH + H(+) = menadiol + NADP(+). The catalysed reaction is prostaglandin D2 + NADP(+) = 15-oxoprostaglandin D2 + NADPH + H(+). The enzyme catalyses prostaglandin E2 + NADP(+) = 15-oxoprostaglandin E2 + NADPH + H(+). It catalyses the reaction prostaglandin F2alpha + NADP(+) = 15-oxoprostaglandin F2alpha + NADPH + H(+). It carries out the reaction daunorubicin + NADPH + H(+) = 13-dihydrodaunorubicin + NADP(+). The catalysed reaction is S-nitrosoglutathione + NADPH + H(+) = S-(hydroxysulfenamide)glutathione + NADP(+). The enzyme catalyses a primary alcohol + NADP(+) = an aldehyde + NADPH + H(+). It catalyses the reaction cortisol + NADPH + H(+) = 20beta-dihydrocortisol + NADP(+). It carries out the reaction corticosterone + NADPH + H(+) = 20beta-dihydrocorticosterone + NADP(+). In terms of biological role, NADPH-dependent reductase with broad substrate specificity. Catalyzes the reduction of a wide variety of carbonyl compounds including quinones, prostaglandins, menadione, plus various xenobiotics. Catalyzes the reduction of the antitumor anthracyclines doxorubicin and daunorubicin to the cardiotoxic compounds doxorubicinol and daunorubicinol. Can convert prostaglandin E to prostaglandin F2-alpha. Can bind glutathione, which explains its higher affinity for glutathione-conjugated substrates. Catalyzes the reduction of S-nitrosoglutathione. In addition, participates in the glucocorticoid metabolism by catalyzing the NADPH-dependent cortisol/corticosterone into 20beta-dihydrocortisol (20b-DHF) or 20beta-corticosterone (20b-DHB), which are weak agonists of NR3C1 and NR3C2 in adipose tissue. The protein is Carbonyl reductase [NADPH] 1 of Oryctolagus cuniculus (Rabbit).